The sequence spans 167 residues: Schlafen-like protein (167 aa).

It belongs to the Schlafen family. Subgroup poxviridae B3 subfamily.

This is Schlafen-like protein from Bos taurus (Bovine).